We begin with the raw amino-acid sequence, 659 residues long: Protein SCARECROW 1 (659 aa).

2 disordered regions span residues 1–33 (MGSS…ITSL) and 188–285 (SDPA…KQRD). Over residues 190–228 (PAPPPPPPPSHPALLPPDATAPPPPPTSVAALPPPPPPQ) the composition is skewed to pro residues. A compositionally biased stretch (low complexity) spans 258 to 271 (AAAAAAAAAAALAA). Residues 258–289 (AAAAAAAAAAALAAAKERKEEQRRKQRDEEGL) are a coiled coil. The segment covering 272 to 285 (AKERKEEQRRKQRD) has biased composition (basic and acidic residues). The region spanning 282-652 (KQRDEEGLHL…LCLLTASAWR (371 aa)) is the GRAS domain. Residues 289–353 (LHLLTLLLQC…VSSCLGLYAP (65 aa)) form a leucine repeat I (LRI) region. The LxCxE motif motif lies at 296-300 (LQCAE). The interval 372-437 (FQVFNGISPF…GGPPRVRLTG (66 aa)) is VHIID. The VHIID signature appears at 403-407 (VHIID). The segment at 447-479 (ATGKRLSDFADTLGLPFEFCPVADKAGNLDPEK) is leucine repeat II (LRII). The tract at residues 488–575 (VAVHWLRHSL…QQLLSREIRN (88 aa)) is PFYRE. The segment at 578–652 (AVGGPARTGD…LCLLTASAWR (75 aa)) is SAW.

This sequence belongs to the GRAS family. In terms of assembly, interacts with SHR1, but not with SHR2.

It localises to the nucleus. Transcription factor required for quiescent center cells specification and maintenance of surrounding stem cells, and for the asymmetric cell division involved in radial pattern formation in roots. Essential for cell division but not differentiation of the ground tissue. Regulates the radial organization of the shoot axial organs. Restricts SHR movment and sequesters it into the nucleus of the endodermis. The protein is Protein SCARECROW 1 (SCR1) of Oryza sativa subsp. indica (Rice).